We begin with the raw amino-acid sequence, 141 residues long: Large ribosomal subunit protein uL11 (141 aa).

This sequence belongs to the universal ribosomal protein uL11 family. Part of the ribosomal stalk of the 50S ribosomal subunit. Interacts with L10 and the large rRNA to form the base of the stalk. L10 forms an elongated spine to which L12 dimers bind in a sequential fashion forming a multimeric L10(L12)X complex. In terms of processing, one or more lysine residues are methylated.

Forms part of the ribosomal stalk which helps the ribosome interact with GTP-bound translation factors. The protein is Large ribosomal subunit protein uL11 of Acaryochloris marina (strain MBIC 11017).